The following is a 353-amino-acid chain: Phosphate acyltransferase (353 aa).

This sequence belongs to the PlsX family. As to quaternary structure, homodimer. Probably interacts with PlsY.

It localises to the cytoplasm. The enzyme catalyses a fatty acyl-[ACP] + phosphate = an acyl phosphate + holo-[ACP]. The protein operates within lipid metabolism; phospholipid metabolism. Functionally, catalyzes the reversible formation of acyl-phosphate (acyl-PO(4)) from acyl-[acyl-carrier-protein] (acyl-ACP). This enzyme utilizes acyl-ACP as fatty acyl donor, but not acyl-CoA. This chain is Phosphate acyltransferase, found in Bradyrhizobium diazoefficiens (strain JCM 10833 / BCRC 13528 / IAM 13628 / NBRC 14792 / USDA 110).